Reading from the N-terminus, the 236-residue chain is Opacity protein opA50 (236 aa).

A signal peptide is located at residue A1.

Belongs to the opacity porin family.

It localises to the cell outer membrane. Functionally, implicated in a number of adherence functions. OPA proteins are implicated in pathogenesis and are subject to phase variation. The polypeptide is Opacity protein opA50 (opaC) (Neisseria gonorrhoeae).